The following is a 692-amino-acid chain: Protein hook (692 aa).

Residues 6-123 (SEMYYSLLEW…RLLQLVLGCA (118 aa)) enclose the Calponin-homology (CH) domain. A coiled-coil region spans residues 135–576 (EIMGLEEELQ…YQSKVIQLET (442 aa)). Residues 161 to 180 (AGERSPSSSASGGAGSGGAV) form a disordered region.

Belongs to the hook family. As to quaternary structure, homodimer. Interacts with microtubules via its N-terminus.

It is found in the cytoplasm. Its subcellular location is the cytoskeleton. It localises to the endosome. The protein localises to the synapse. Its function is as follows. Involved in endocytic trafficking by stabilizing organelles of the endocytic pathway. Probably acts as a cytoskeletal linker protein required to tether endosome vesicles to the cytoskeleton. Involved in modulation of endocytosis at stages required for down-regulation of membrane proteins that control synapse size. Not involved in synaptic vesicle recycling. Required in R7 cells for boss endocytosis into multivesicular bodies (MVBs). Has a role in regulating adult longevity. This is Protein hook from Drosophila willistoni (Fruit fly).